We begin with the raw amino-acid sequence, 1091 residues long: Sodium/potassium exporting P-type ATPase 1 (1091 aa).

The Cytoplasmic segment spans residues 1-63 (MGEGTTKENN…LGDDTKIDYK (63 aa)). Residues 64-84 (AMVLHQVCNAMIMVLLISMII) form a helical membrane-spanning segment. The Extracellular portion of the chain corresponds to 85–90 (SFAMHD). Residues 91 to 111 (WITGGVISFVIAVNVLIGLVQ) traverse the membrane as a helical segment. The Cytoplasmic portion of the chain corresponds to 112-282 (EYKATKTMNS…TNVGTPLHRK (171 aa)). The chain crosses the membrane as a helical span at residues 283–303 (LSKLAVLLFWIAVLFAIIVMA). Over 304–312 (SQKFDVDKR) the chain is Extracellular. A helical membrane pass occupies residues 313–333 (VAIYAICVALSMIPSSLVVVL). At 334–815 (TITMSVGAAV…RRMTDNIQKF (482 aa)) the chain is on the cytoplasmic side. D369 serves as the catalytic 4-aspartylphosphate intermediate. Positions 369 and 371 each coordinate Mg(2+). ATP contacts are provided by T371 and E483. Residues 499–525 (ALTGEKSTNQSNENDQSSLSQHNEKPG) form a disordered region. The segment covering 503-519 (EKSTNQSNENDQSSLSQ) has biased composition (polar residues). Residues K561, R606, T673, G674, D675, R732, and K738 each coordinate ATP. D757 is a binding site for Mg(2+). N760 lines the ATP pocket. The helical transmembrane segment at 816–836 (VLQLLAENVAQALYLIIGLVF) threads the bilayer. The Extracellular portion of the chain corresponds to 837–848 (RDENGKSVFPLS). Residues 849–869 (PVEVLWIIVVTSCFPAMGLGL) traverse the membrane as a helical segment. Topologically, residues 870-885 (EKAAPDLMDRPPHDSE) are cytoplasmic. A helical membrane pass occupies residues 886 to 906 (VGIFTWEVIIDTFAYGIIMTG). At 907 to 943 (SCMASFTGSLYGINSGRLGHDCDGTYNSSCRDVYRSR) the chain is on the extracellular side. A helical transmembrane segment spans residues 944–964 (SAAFATMTWCALILAWEVVDM). Residues 965–991 (RRSFFRMHPDTDSPVKEFFRSIWGNQF) lie on the Cytoplasmic side of the membrane. The helical transmembrane segment at 992–1012 (LFWSIIFGFVSAFPVVYIPVI) threads the bilayer. Topologically, residues 1013–1021 (NDKVFLHKP) are extracellular. A helical membrane pass occupies residues 1022–1042 (IGAEWGLAIAFTIAFWIGAEL). Residues 1043 to 1091 (YKCGKRRYFKTQRAHNPENDLESNNKRDPFEAYSTSTTIHTEVNIGIKQ) lie on the Cytoplasmic side of the membrane.

The protein belongs to the cation transport ATPase (P-type) (TC 3.A.3) family. Type IID subfamily. Requires Mg(2+) as cofactor. The active site is phosphorylated in presence of sodium or potassium and in conditions of higher pH. Not phosphorylated in presence of calcium ions.

The protein resides in the cell membrane. The catalysed reaction is Na(+)(in) + ATP + H2O = Na(+)(out) + ADP + phosphate + H(+). It catalyses the reaction K(+)(in) + ATP + H2O = K(+)(out) + ADP + phosphate + H(+). Functionally, catalyzes the hydrolysis of ATP coupled with the export of sodium and potassium from the cell. May export potassium less efficiently. May transport other cations such as lithium. Sodium/potassium efflux ATPases are involved in salt tolerance and maintaining the membrane potential across the plasma membrane in high salinity (Na+) or alkaline (K+) environments. Is negatively modulated by SIS2/HAL3. This Saccharomyces cerevisiae (strain ATCC 204508 / S288c) (Baker's yeast) protein is Sodium/potassium exporting P-type ATPase 1.